We begin with the raw amino-acid sequence, 329 residues long: MWVFKFLLLPMVSFALSPEEMLDTQWELWKKTHQKQYNSKVDEISRRLIWEKNLKQISAHNLEASLGVHTYELAMNHLGDMTSEEVVQKMTGLRIPPSRSYSNDTLYTPEWEGRVPDSIDYRKKGYVTPVKNQGQCGSCWAFSSAGALEGQLKKKTGKLLALSPQNLVDCVTENYGCGGGYMTTAFQYVQQNGGIDSEDAYPYVGQDESCMYNATAKAAKCRGYREIPVGNEKALKRAVARVGPISVSIDASLASFQFYSRGVYYDENCDRDNVNHAVLVVGYGTQKGSKHWIIKNSWGESWGNKGYALLARNKNNACGITNMASFPKM.

Residues methionine 1–alanine 15 form the signal peptide. Positions leucine 16–arginine 114 are cleaved as a propeptide — activation peptide. Residue asparagine 103 is glycosylated (N-linked (GlcNAc...) asparagine). 2 cysteine pairs are disulfide-bonded: cysteine 136/cysteine 177 and cysteine 170/cysteine 210. The active site involves cysteine 139. Asparagine 213 carries N-linked (GlcNAc...) asparagine glycosylation. Cysteine 269 and cysteine 318 are oxidised to a cystine. Active-site residues include histidine 276 and asparagine 296.

The protein belongs to the peptidase C1 family. In terms of tissue distribution, predominantly expressed in bones. Expressed in thyroid epithelial cells.

The protein localises to the lysosome. It is found in the secreted. It localises to the apical cell membrane. The enzyme catalyses Broad proteolytic activity. With small-molecule substrates and inhibitors, the major determinant of specificity is P2, which is preferably Leu, Met &gt; Phe, and not Arg.. Thiol protease involved in osteoclastic bone resorption. Displays potent endoprotease activity against fibrinogen at acid pH. May play an important role in extracellular matrix degradation. Involved in the release of thyroid hormone thyroxine (T4) by limited proteolysis of TG/thyroglobulin in the thyroid follicle lumen. This is Cathepsin K (Ctsk) from Mus musculus (Mouse).